A 183-amino-acid polypeptide reads, in one-letter code: Ferritin heavy chain (183 aa).

N-acetylmethionine is present on M1. T2 carries the post-translational modification N-acetylthreonine; in Ferritin heavy chain, N-terminally processed. The Ferritin-like diiron domain occupies 11–160 (QNYHQDSEAA…DHVTNLRKMG (150 aa)). E28, E63, H66, E108, and Q142 together coordinate Fe cation. Phosphoserine occurs at positions 179 and 183.

Belongs to the ferritin family. In terms of assembly, oligomer of 24 subunits. There are two types of subunits: L (light) chain and H (heavy) chain. The major chain can be light or heavy, depending on the species and tissue type. The functional molecule forms a roughly spherical shell with a diameter of 12 nm and contains a central cavity into which the insoluble mineral iron core is deposited. Interacts with NCOA4; NCOA4 promotes targeting of the iron-binding ferritin complex to autolysosomes following starvation or iron depletion.

The protein resides in the cytoplasm. It localises to the lysosome. The protein localises to the cytoplasmic vesicle. It is found in the autophagosome. The catalysed reaction is 4 Fe(2+) + O2 + 4 H(+) = 4 Fe(3+) + 2 H2O. Functionally, stores iron in a soluble, non-toxic, readily available form. Important for iron homeostasis. Has ferroxidase activity. Iron is taken up in the ferrous form and deposited as ferric hydroxides after oxidation. Also plays a role in delivery of iron to cells. Mediates iron uptake in capsule cells of the developing kidney. Delivery to lysosomes is mediated by the cargo receptor NCOA4 for autophagic degradation and release of iron. This chain is Ferritin heavy chain (FTH1), found in Canis lupus familiaris (Dog).